The chain runs to 307 residues: Protoheme IX farnesyltransferase (307 aa).

The next 9 membrane-spanning stretches (helical) occupy residues 33 to 53 (IGIV…AFYF), 62 to 82 (LHIV…SCSI), 111 to 131 (RVLW…LMTT), 132 to 152 (VTAA…YTLW), 159 to 179 (LNTV…WTAV), 185 to 205 (IVPL…FLAL), 229 to 249 (MTKR…FYLF), 251 to 271 (LGIP…LLGL), and 287 to 307 (FVYS…ATIW).

It belongs to the UbiA prenyltransferase family. Protoheme IX farnesyltransferase subfamily. In terms of assembly, interacts with CtaA.

It localises to the cell membrane. The catalysed reaction is heme b + (2E,6E)-farnesyl diphosphate + H2O = Fe(II)-heme o + diphosphate. Its pathway is porphyrin-containing compound metabolism; heme O biosynthesis; heme O from protoheme: step 1/1. Converts heme B (protoheme IX) to heme O by substitution of the vinyl group on carbon 2 of heme B porphyrin ring with a hydroxyethyl farnesyl side group. This chain is Protoheme IX farnesyltransferase, found in Geobacillus thermodenitrificans (strain NG80-2).